The sequence spans 736 residues: Phosphoribosylformylglycinamidine synthase subunit PurL (736 aa).

H49 is a catalytic residue. 2 residues coordinate ATP: Y52 and K91. E93 lines the Mg(2+) pocket. Residues 94–97 (SHNH) and R116 each bind substrate. The active-site Proton acceptor is H95. Residue D117 coordinates Mg(2+). Residue Q240 coordinates substrate. D268 lines the Mg(2+) pocket. 312–314 (ESQ) lines the substrate pocket. Positions 493 and 530 each coordinate ATP. N531 serves as a coordination point for Mg(2+). Position 533 (S533) interacts with substrate.

It belongs to the FGAMS family. As to quaternary structure, monomer. Part of the FGAM synthase complex composed of 1 PurL, 1 PurQ and 2 PurS subunits.

The protein localises to the cytoplasm. It catalyses the reaction N(2)-formyl-N(1)-(5-phospho-beta-D-ribosyl)glycinamide + L-glutamine + ATP + H2O = 2-formamido-N(1)-(5-O-phospho-beta-D-ribosyl)acetamidine + L-glutamate + ADP + phosphate + H(+). The protein operates within purine metabolism; IMP biosynthesis via de novo pathway; 5-amino-1-(5-phospho-D-ribosyl)imidazole from N(2)-formyl-N(1)-(5-phospho-D-ribosyl)glycinamide: step 1/2. In terms of biological role, part of the phosphoribosylformylglycinamidine synthase complex involved in the purines biosynthetic pathway. Catalyzes the ATP-dependent conversion of formylglycinamide ribonucleotide (FGAR) and glutamine to yield formylglycinamidine ribonucleotide (FGAM) and glutamate. The FGAM synthase complex is composed of three subunits. PurQ produces an ammonia molecule by converting glutamine to glutamate. PurL transfers the ammonia molecule to FGAR to form FGAM in an ATP-dependent manner. PurS interacts with PurQ and PurL and is thought to assist in the transfer of the ammonia molecule from PurQ to PurL. The polypeptide is Phosphoribosylformylglycinamidine synthase subunit PurL (Rhodopseudomonas palustris (strain TIE-1)).